The primary structure comprises 279 residues: Large ribosomal subunit protein uL2 (279 aa).

The tract at residues 222 to 264 (GVAMNPVDHPHGGGEGRTSGGRNPVTPAGKPTKGAKTRVNKAT) is disordered.

It belongs to the universal ribosomal protein uL2 family. As to quaternary structure, part of the 50S ribosomal subunit. Forms a bridge to the 30S subunit in the 70S ribosome.

In terms of biological role, one of the primary rRNA binding proteins. Required for association of the 30S and 50S subunits to form the 70S ribosome, for tRNA binding and peptide bond formation. It has been suggested to have peptidyltransferase activity; this is somewhat controversial. Makes several contacts with the 16S rRNA in the 70S ribosome. This Caulobacter sp. (strain K31) protein is Large ribosomal subunit protein uL2.